A 295-amino-acid chain; its full sequence is Elongation factor Ts (295 aa).

Residues 79 to 82 are involved in Mg(2+) ion dislocation from EF-Tu; the sequence is TDFV.

The protein belongs to the EF-Ts family.

The protein resides in the cytoplasm. Associates with the EF-Tu.GDP complex and induces the exchange of GDP to GTP. It remains bound to the aminoacyl-tRNA.EF-Tu.GTP complex up to the GTP hydrolysis stage on the ribosome. The chain is Elongation factor Ts from Bacillus mycoides (strain KBAB4) (Bacillus weihenstephanensis).